A 337-amino-acid chain; its full sequence is RNA 3'-terminal phosphate cyclase (337 aa).

Residues Gln101 and 282-285 (HMSD) each bind ATP. The active-site Tele-AMP-histidine intermediate is His306.

It belongs to the RNA 3'-terminal cyclase family. Type 1 subfamily.

It localises to the cytoplasm. The catalysed reaction is a 3'-end 3'-phospho-ribonucleotide-RNA + ATP = a 3'-end 2',3'-cyclophospho-ribonucleotide-RNA + AMP + diphosphate. In terms of biological role, catalyzes the conversion of 3'-phosphate to a 2',3'-cyclic phosphodiester at the end of RNA. The mechanism of action of the enzyme occurs in 3 steps: (A) adenylation of the enzyme by ATP; (B) transfer of adenylate to an RNA-N3'P to produce RNA-N3'PP5'A; (C) and attack of the adjacent 2'-hydroxyl on the 3'-phosphorus in the diester linkage to produce the cyclic end product. The biological role of this enzyme is unknown but it is likely to function in some aspects of cellular RNA processing. This chain is RNA 3'-terminal phosphate cyclase, found in Saccharolobus islandicus (strain M.16.4 / Kamchatka #3) (Sulfolobus islandicus).